The chain runs to 119 residues: Large ribosomal subunit protein uL24 (119 aa).

It belongs to the universal ribosomal protein uL24 family. In terms of assembly, part of the 50S ribosomal subunit.

Functionally, one of two assembly initiator proteins, it binds directly to the 5'-end of the 23S rRNA, where it nucleates assembly of the 50S subunit. Its function is as follows. One of the proteins that surrounds the polypeptide exit tunnel on the outside of the subunit. The sequence is that of Large ribosomal subunit protein uL24 from Clavibacter michiganensis subsp. michiganensis (strain NCPPB 382).